Here is an 86-residue protein sequence, read N- to C-terminus: Sec-independent protein translocase protein TatA (86 aa).

A helical transmembrane segment spans residues 1-21 (MGISIWQLLIILAIVLVLFGA).

The protein belongs to the TatA/E family. In terms of assembly, the Tat system comprises two distinct complexes: a TatABC complex, containing multiple copies of TatA, TatB and TatC subunits, and a separate TatA complex, containing only TatA subunits. Substrates initially bind to the TatABC complex, which probably triggers association of the separate TatA complex to form the active translocon.

Its subcellular location is the cell inner membrane. Part of the twin-arginine translocation (Tat) system that transports large folded proteins containing a characteristic twin-arginine motif in their signal peptide across membranes. TatA could form the protein-conducting channel of the Tat system. The protein is Sec-independent protein translocase protein TatA of Hydrogenovibrio crunogenus (strain DSM 25203 / XCL-2) (Thiomicrospira crunogena).